The following is a 97-amino-acid chain: uncharacterized protein (97 aa).

Disordered stretches follow at residues 1–20 and 52–97; these read MTEG…IASD and VPAA…GRRA.

This is an uncharacterized protein from Paracoccus pantotrophus (Thiosphaera pantotropha).